Here is a 238-residue protein sequence, read N- to C-terminus: Large ribosomal subunit protein uL2 (238 aa).

A disordered region spans residues 199–238; it reads PHGGGLHQSVSRPSTVSRNAPPGRKVGHIAARRTGRKEGA. A compositionally biased stretch (polar residues) spans 206–216; sequence QSVSRPSTVSR. Residues 223-238 show a composition bias toward basic residues; sequence KVGHIAARRTGRKEGA.

The protein belongs to the universal ribosomal protein uL2 family. In terms of assembly, part of the 50S ribosomal subunit. Forms a bridge to the 30S subunit in the 70S ribosome.

One of the primary rRNA binding proteins. Required for association of the 30S and 50S subunits to form the 70S ribosome, for tRNA binding and peptide bond formation. It has been suggested to have peptidyltransferase activity; this is somewhat controversial. Makes several contacts with the 16S rRNA in the 70S ribosome. The chain is Large ribosomal subunit protein uL2 from Sulfurisphaera tokodaii (strain DSM 16993 / JCM 10545 / NBRC 100140 / 7) (Sulfolobus tokodaii).